We begin with the raw amino-acid sequence, 384 residues long: UDP-N-acetylglucosamine--N-acetylmuramyl-(pentapeptide) pyrophosphoryl-undecaprenol N-acetylglucosamine transferase (384 aa).

UDP-N-acetyl-alpha-D-glucosamine is bound by residues 22 to 24 (TGG), R179, S209, and Q312.

This sequence belongs to the glycosyltransferase 28 family. MurG subfamily.

The protein localises to the cell inner membrane. It carries out the reaction di-trans,octa-cis-undecaprenyl diphospho-N-acetyl-alpha-D-muramoyl-L-alanyl-D-glutamyl-meso-2,6-diaminopimeloyl-D-alanyl-D-alanine + UDP-N-acetyl-alpha-D-glucosamine = di-trans,octa-cis-undecaprenyl diphospho-[N-acetyl-alpha-D-glucosaminyl-(1-&gt;4)]-N-acetyl-alpha-D-muramoyl-L-alanyl-D-glutamyl-meso-2,6-diaminopimeloyl-D-alanyl-D-alanine + UDP + H(+). Its pathway is cell wall biogenesis; peptidoglycan biosynthesis. Cell wall formation. Catalyzes the transfer of a GlcNAc subunit on undecaprenyl-pyrophosphoryl-MurNAc-pentapeptide (lipid intermediate I) to form undecaprenyl-pyrophosphoryl-MurNAc-(pentapeptide)GlcNAc (lipid intermediate II). This is UDP-N-acetylglucosamine--N-acetylmuramyl-(pentapeptide) pyrophosphoryl-undecaprenol N-acetylglucosamine transferase from Treponema pallidum (strain Nichols).